We begin with the raw amino-acid sequence, 198 residues long: Nucleoid occlusion factor SlmA (198 aa).

One can recognise an HTH tetR-type domain in the interval 10–70 (NRREEILQSL…SLIEFIEDSL (61 aa)). A DNA-binding region (H-T-H motif) is located at residues 33-52 (TTAKLAASVGVSEAALYRHF). A coiled-coil region spans residues 117–144 (EQDRLQGRINQLFERIEAQLRQVLREKR).

Belongs to the nucleoid occlusion factor SlmA family. In terms of assembly, homodimer. Interacts with FtsZ.

It is found in the cytoplasm. The protein localises to the nucleoid. Required for nucleoid occlusion (NO) phenomenon, which prevents Z-ring formation and cell division over the nucleoid. Acts as a DNA-associated cell division inhibitor that binds simultaneously chromosomal DNA and FtsZ, and disrupts the assembly of FtsZ polymers. SlmA-DNA-binding sequences (SBS) are dispersed on non-Ter regions of the chromosome, preventing FtsZ polymerization at these regions. This Salmonella agona (strain SL483) protein is Nucleoid occlusion factor SlmA.